Consider the following 491-residue polypeptide: Peptidoglycan D,D-transpeptidase PbpA (491 aa).

Topologically, residues M1–R7 are cytoplasmic. Residues I8–V28 traverse the membrane as a helical; Signal-anchor for type II membrane protein segment. Residues F29–P491 are Periplasmic-facing. Residues G160 to E484 are transpeptidase. S222 (acyl-ester intermediate) is an active-site residue.

Belongs to the transpeptidase family.

Its subcellular location is the cell inner membrane. It carries out the reaction Preferential cleavage: (Ac)2-L-Lys-D-Ala-|-D-Ala. Also transpeptidation of peptidyl-alanyl moieties that are N-acyl substituents of D-alanine.. It participates in cell wall biogenesis; peptidoglycan biosynthesis. Its function is as follows. Transpeptidase that catalyzes cross-linking of the peptidoglycan cell wall. Required for the regulation of cell length. This Mycobacterium tuberculosis (strain CDC 1551 / Oshkosh) protein is Peptidoglycan D,D-transpeptidase PbpA (pbpA).